Consider the following 160-residue polypeptide: Ureidoglycolate lyase (160 aa).

It belongs to the ureidoglycolate lyase family. Homodimer. Ni(2+) serves as cofactor.

It catalyses the reaction (S)-ureidoglycolate = urea + glyoxylate. Its pathway is nitrogen metabolism; (S)-allantoin degradation. Its function is as follows. Catalyzes the catabolism of the allantoin degradation intermediate (S)-ureidoglycolate, generating urea and glyoxylate. Involved in the anaerobic utilization of allantoin as sole nitrogen source. Reinforces the induction of genes involved in the degradation of allantoin and glyoxylate by producing glyoxylate. The polypeptide is Ureidoglycolate lyase (Escherichia coli O139:H28 (strain E24377A / ETEC)).